Reading from the N-terminus, the 1034-residue chain is Probable isoleucine--tRNA ligase, mitochondrial (1034 aa).

Residues M1–E32 constitute a mitochondrion transit peptide. The 'HIGH' region signature appears at P94–H104. The 'KMSKS' region signature appears at K655 to S659. K658 lines the ATP pocket.

The protein belongs to the class-I aminoacyl-tRNA synthetase family.

Its subcellular location is the mitochondrion matrix. The catalysed reaction is tRNA(Ile) + L-isoleucine + ATP = L-isoleucyl-tRNA(Ile) + AMP + diphosphate. The protein is Probable isoleucine--tRNA ligase, mitochondrial (mileS) of Dictyostelium discoideum (Social amoeba).